The primary structure comprises 104 residues: Type IV secretion system protein PtlB homolog (104 aa).

Residues 30–50 form a helical membrane-spanning segment; that stretch reads IALLGIWFSIAFLALFPVALL.

This sequence belongs to the virB3 family.

It is found in the cell membrane. The chain is Type IV secretion system protein PtlB homolog (ptlB) from Bordetella parapertussis (strain 12822 / ATCC BAA-587 / NCTC 13253).